Reading from the N-terminus, the 618-residue chain is DNA mismatch repair protein MutL (618 aa).

This sequence belongs to the DNA mismatch repair MutL/HexB family.

In terms of biological role, this protein is involved in the repair of mismatches in DNA. It is required for dam-dependent methyl-directed DNA mismatch repair. May act as a 'molecular matchmaker', a protein that promotes the formation of a stable complex between two or more DNA-binding proteins in an ATP-dependent manner without itself being part of a final effector complex. This is DNA mismatch repair protein MutL from Porphyromonas gingivalis (strain ATCC 33277 / DSM 20709 / CIP 103683 / JCM 12257 / NCTC 11834 / 2561).